Here is a 501-residue protein sequence, read N- to C-terminus: Membrane-bound lytic murein transglycosylase F (501 aa).

An N-terminal signal peptide occupies residues 1–29 (MTKILLNTASTVLTRLWKLSLLGLVFAVA). Residues 30–274 (AATLVSSRIP…DAMETFYGHL (245 aa)) are non-LT domain. The segment at 275–501 (GEIDYSGAIL…VKSISGTSSL (227 aa)) is LT domain. E321 is an active-site residue.

This sequence in the N-terminal section; belongs to the bacterial solute-binding protein 3 family. It in the C-terminal section; belongs to the transglycosylase Slt family.

Its subcellular location is the cell outer membrane. It carries out the reaction Exolytic cleavage of the (1-&gt;4)-beta-glycosidic linkage between N-acetylmuramic acid (MurNAc) and N-acetylglucosamine (GlcNAc) residues in peptidoglycan, from either the reducing or the non-reducing ends of the peptidoglycan chains, with concomitant formation of a 1,6-anhydrobond in the MurNAc residue.. Murein-degrading enzyme that degrades murein glycan strands and insoluble, high-molecular weight murein sacculi, with the concomitant formation of a 1,6-anhydromuramoyl product. Lytic transglycosylases (LTs) play an integral role in the metabolism of the peptidoglycan (PG) sacculus. Their lytic action creates space within the PG sacculus to allow for its expansion as well as for the insertion of various structures such as secretion systems and flagella. The protein is Membrane-bound lytic murein transglycosylase F of Saccharophagus degradans (strain 2-40 / ATCC 43961 / DSM 17024).